Here is a 37-residue protein sequence, read N- to C-terminus: Cytochrome b6-f complex subunit 5 (37 aa).

The chain crosses the membrane as a helical span at residues 5 to 25; it reads LLSGIVLGLIPVTLAGLFVTA.

Belongs to the PetG family. The 4 large subunits of the cytochrome b6-f complex are cytochrome b6, subunit IV (17 kDa polypeptide, PetD), cytochrome f and the Rieske protein, while the 4 small subunits are PetG, PetL, PetM and PetN. The complex functions as a dimer.

It is found in the plastid. The protein resides in the chloroplast thylakoid membrane. Component of the cytochrome b6-f complex, which mediates electron transfer between photosystem II (PSII) and photosystem I (PSI), cyclic electron flow around PSI, and state transitions. PetG is required for either the stability or assembly of the cytochrome b6-f complex. The chain is Cytochrome b6-f complex subunit 5 from Chlorokybus atmophyticus (Soil alga).